We begin with the raw amino-acid sequence, 205 residues long: MSSPLPMTALVLAGYLSGSLLGAVWVCRALGRRDPRHAGSRNPGFSNVLRLHGVVPAALTLGVDAAKAMPVLWVAQREALPIWAQGAVGLSVLVGHSYPLWHRGRGGKAVASAFGVLLMIATPVAWVCALCWALLAWRSRTAAVASLAAALLAPLASYWLAREATLVVSVFSALVLVRHAWNIRRLGQGGEPGLKREERIKPPEE.

Helical transmembrane passes span 7–27, 54–74, 80–100, 116–136, 141–161, and 163–183; these read MTAL…VWVC, VVPA…VLWV, LPIW…SYPL, VLLM…ALLA, TAAV…YWLA, and EATL…AWNI.

This sequence belongs to the PlsY family. In terms of assembly, probably interacts with PlsX.

The protein resides in the cell inner membrane. It catalyses the reaction an acyl phosphate + sn-glycerol 3-phosphate = a 1-acyl-sn-glycero-3-phosphate + phosphate. The protein operates within lipid metabolism; phospholipid metabolism. Its function is as follows. Catalyzes the transfer of an acyl group from acyl-phosphate (acyl-PO(4)) to glycerol-3-phosphate (G3P) to form lysophosphatidic acid (LPA). This enzyme utilizes acyl-phosphate as fatty acyl donor, but not acyl-CoA or acyl-ACP. The sequence is that of Glycerol-3-phosphate acyltransferase from Chromohalobacter salexigens (strain ATCC BAA-138 / DSM 3043 / CIP 106854 / NCIMB 13768 / 1H11).